A 231-amino-acid chain; its full sequence is Small ribosomal subunit protein uS3 (231 aa).

The KH type-2 domain occupies 39 to 107 (IRELLHKELK…DVVINIVEIR (69 aa)).

The protein belongs to the universal ribosomal protein uS3 family. In terms of assembly, part of the 30S ribosomal subunit. Forms a tight complex with proteins S10 and S14.

Binds the lower part of the 30S subunit head. Binds mRNA in the 70S ribosome, positioning it for translation. This Nitrobacter hamburgensis (strain DSM 10229 / NCIMB 13809 / X14) protein is Small ribosomal subunit protein uS3.